Here is a 415-residue protein sequence, read N- to C-terminus: Fructose-like permease IIC component (415 aa).

Residues 1 to 46 (MAIKKRSATVVHGASGAAAAVKNPQASKSSFWGELPQHVMSGISRM) lie on the Cytoplasmic side of the membrane. One can recognise a PTS EIIC type-2 domain in the interval 35–415 (LPQHVMSGIS…RKGKLLIESL (381 aa)). Residues 47–67 (VPTLIMGGVILAFSQLIAYSW) form a helical membrane-spanning segment. At 68-101 (LKIPADIGIMDALNSGKFSGFDLSLLKFAWLSQS) the chain is on the periplasmic side. The chain crosses the membrane as a helical span at residues 102–122 (FGGVLFGFAIPMFAAFVANSI). At 123 to 126 (GGKL) the chain is on the cytoplasmic side. The helical transmembrane segment at 127–147 (AFPAGFIGGLMSTQPTQLLNF) threads the bilayer. Residues 148–157 (DPSTMQWATS) are Periplasmic-facing. A helical membrane pass occupies residues 158–178 (SPVPSTFIGALIISIVAGYLV). The Cytoplasmic portion of the chain corresponds to 179-197 (KWMNQKIQLPDFLLAFKTT). A helical transmembrane segment spans residues 198 to 218 (FLLPILSAIFVMLAMYYVITP). Over 219–237 (FGGWINGGIRTVLTAAGEK) the chain is Periplasmic. Residues 238 to 258 (GALMYAMGIAAATAIDLGGPI) traverse the membrane as a helical segment. Residues 259–276 (NKAAGFVAFSFTTDHVLP) lie on the Cytoplasmic side of the membrane. Residues 277–297 (VTARSIAIVIPPIGLGLATII) form a helical membrane-spanning segment. Residues 298–318 (DRRLTGKRLFNAQLYPQGKTA) lie on the Periplasmic side of the membrane. A helical transmembrane segment spans residues 319–339 (MFLAFMGISEGAIPFALESPI). The Cytoplasmic segment spans residues 340 to 341 (TA). Residues 342–362 (IPSYMVGAIVGSTAAVWLGAV) form a helical membrane-spanning segment. Topologically, residues 363-378 (QWFPESAIWAWPLVTN) are periplasmic. The helical transmembrane segment at 379-399 (LGVYMAGIALGAIITALMVVF) threads the bilayer. Residues 400–415 (LRLMMFRKGKLLIESL) lie on the Cytoplasmic side of the membrane.

It localises to the cell inner membrane. Its function is as follows. The phosphoenolpyruvate-dependent sugar phosphotransferase system (PTS), a major carbohydrate active -transport system, catalyzes the phosphorylation of incoming sugar substrates concomitant with their translocation across the cell membrane. This chain is Fructose-like permease IIC component (fryC), found in Escherichia coli O6:H1 (strain CFT073 / ATCC 700928 / UPEC).